Reading from the N-terminus, the 114-residue chain is Nucleoid-associated protein THEYE_A1069 (114 aa).

The protein belongs to the YbaB/EbfC family. As to quaternary structure, homodimer.

The protein resides in the cytoplasm. The protein localises to the nucleoid. Functionally, binds to DNA and alters its conformation. May be involved in regulation of gene expression, nucleoid organization and DNA protection. This is Nucleoid-associated protein THEYE_A1069 from Thermodesulfovibrio yellowstonii (strain ATCC 51303 / DSM 11347 / YP87).